The sequence spans 180 residues: Shikimate kinase (180 aa).

14 to 19 (GAGKST) is an ATP binding site. Mg(2+) is bound at residue Ser-18. The substrate site is built by Asp-36, Arg-60, and Gly-82. ATP is bound at residue Arg-120. Residue Arg-140 coordinates substrate. An ATP-binding site is contributed by Gln-157.

This sequence belongs to the shikimate kinase family. In terms of assembly, monomer. Mg(2+) is required as a cofactor.

It localises to the cytoplasm. The catalysed reaction is shikimate + ATP = 3-phosphoshikimate + ADP + H(+). The protein operates within metabolic intermediate biosynthesis; chorismate biosynthesis; chorismate from D-erythrose 4-phosphate and phosphoenolpyruvate: step 5/7. In terms of biological role, catalyzes the specific phosphorylation of the 3-hydroxyl group of shikimic acid using ATP as a cosubstrate. This chain is Shikimate kinase, found in Haemophilus influenzae (strain PittGG).